Reading from the N-terminus, the 564-residue chain is Ell-associated factor Eaf (564 aa).

2 disordered regions span residues 179-255 (SGPG…MITD) and 270-564 (QANI…DDDD). The span at 186 to 205 (ENSTMRVSSKTKVSTGSRRN) shows a compositional bias: polar residues. Residue Ser215 is modified to Phosphoserine. Low complexity predominate over residues 274–283 (SGSSTGSSSG). A compositionally biased stretch (basic residues) spans 297 to 309 (GKQRQAHGKRQQI). Composition is skewed to low complexity over residues 315-329 (PPVQ…QQQP), 343-387 (QQQQ…QQRP), and 409-420 (ASQSVAQAAAVL). Positions 438-453 (DSSDSDSGSDSDDSTE) are enriched in acidic residues. 3 stretches are compositionally biased toward low complexity: residues 463–505 (EQQQ…NQLP), 523–533 (QQPQPQPQQQQ), and 546–564 (NDLL…DDDD).

This sequence belongs to the EAF family.

The protein resides in the nucleus. Promotes transcriptional elongation by Su(Tpl)/ELL. Essential for development. The protein is Ell-associated factor Eaf of Drosophila pseudoobscura pseudoobscura (Fruit fly).